The primary structure comprises 75 residues: Translation initiation factor IF-1, chloroplastic (75 aa).

The 72-residue stretch at 1-72 (MKKQNLIHAE…TKGRIIYRLS (72 aa)) folds into the S1-like domain.

The protein belongs to the IF-1 family. As to quaternary structure, component of the 30S ribosomal translation pre-initiation complex which assembles on the 30S ribosome in the order IF-2 and IF-3, IF-1 and N-formylmethionyl-tRNA(fMet); mRNA recruitment can occur at any time during PIC assembly.

The protein localises to the plastid. It localises to the chloroplast. One of the essential components for the initiation of protein synthesis. Stabilizes the binding of IF-2 and IF-3 on the 30S subunit to which N-formylmethionyl-tRNA(fMet) subsequently binds. Helps modulate mRNA selection, yielding the 30S pre-initiation complex (PIC). Upon addition of the 50S ribosomal subunit IF-1, IF-2 and IF-3 are released leaving the mature 70S translation initiation complex. The chain is Translation initiation factor IF-1, chloroplastic from Pinus koraiensis (Korean pine).